Consider the following 154-residue polypeptide: Large ribosomal subunit protein uL13 (154 aa).

The protein belongs to the universal ribosomal protein uL13 family. In terms of assembly, part of the 50S ribosomal subunit.

In terms of biological role, this protein is one of the early assembly proteins of the 50S ribosomal subunit, although it is not seen to bind rRNA by itself. It is important during the early stages of 50S assembly. The sequence is that of Large ribosomal subunit protein uL13 from Rhizobium johnstonii (strain DSM 114642 / LMG 32736 / 3841) (Rhizobium leguminosarum bv. viciae).